A 1803-amino-acid polypeptide reads, in one-letter code: Pyruvate dehydrogenase [NADP(+)], mitochondrial (1803 aa).

A mitochondrion-targeting transit peptide spans 1–37 (MKQSVRPIISNVLRKEVALYSTIIGQDKGKEPTGRTY). 2 4Fe-4S ferredoxin-type domains span residues 747-776 (FIPQ…PFVL) and 802-831 (FRIQ…MTDA). The [4Fe-4S] cluster site is built by Cys756, Cys759, Cys762, Cys766, Cys811, Cys814, Cys817, and Cys821. A Flavodoxin-like domain is found at 1248–1391 (VTILYGSETG…GFNNWIPSVW (144 aa)). The FAD-binding FR-type domain maps to 1425 to 1650 (KSTPVLSITG…IHPTAMEFPD (226 aa)). FAD contacts are provided by residues 1458–1469 (YQVGDSLGVFPE) and 1585–1595 (IKPRYYSISSA).

This sequence in the N-terminal section; belongs to the pyruvate:ferredoxin/flavodoxin oxidoreductase family. As to quaternary structure, homodimer. FAD serves as cofactor. It depends on FMN as a cofactor. The cofactor is thiamine diphosphate. Requires iron-sulfur cluster as cofactor.

The protein localises to the mitochondrion. It catalyses the reaction pyruvate + NADP(+) + CoA = acetyl-CoA + CO2 + NADPH. In terms of biological role, pyruvate dehydrogenase [NADP(+)] is one of three enzymes participating in respiratory metabolism. The enzyme is also active with 2-oxobutyrate and oxaloacetate. The enzyme is oxygen sensitive. The sequence is that of Pyruvate dehydrogenase [NADP(+)], mitochondrial (PNO) from Euglena gracilis.